The chain runs to 602 residues: Cytoskeleton-associated protein 4 (602 aa).

The disordered stretch occupies residues 1–83; that stretch reads MPSAKQRGSK…GGGGKSSSSS (83 aa). At 1 to 106 the chain is on the cytoplasmic side; that stretch reads MPSAKQRGSK…SASCSRRLGR (106 aa). Ser3, Ser17, and Ser19 each carry phosphoserine. Lys21 is subject to N6-acetyllysine. A compositionally biased stretch (pro residues) spans 35–52; the sequence is KPPPAPQQPPPPPAPHPQ. Over residues 53-64 the composition is skewed to low complexity; that stretch reads QHPQQHPQNQAH. Residue Cys100 is the site of S-palmitoyl cysteine; by ZDHHC2 attachment. Residues 107 to 127 form a helical membrane-spanning segment; sequence ALNFLFYLALVAAAAFSGWCV. Residues 128–602 are Extracellular-facing; it reads HHVLEEVQQV…VKVEKIHEKV (475 aa). Residues 130–214 adopt a coiled-coil conformation; that stretch reads VLEEVQQVRR…QKLQNEILKD (85 aa). Phosphoserine; by FAM20C is present on Ser232. Coiled coils occupy residues 256-460 and 533-602; these read TEVQ…GLGS and LSSL…HEKV. Ser312 carries the post-translational modification Phosphoserine.

Interacts with REEP5. Post-translationally, reversibly palmitoylated. Palmitoylation at Cys-100 by ZDHHC2 is required for its trafficking from the ER to the plasma membrane and for its perinuclear localization. Palmitoylation by ZDHHC2 is also required for its function in APF-mediated antiproliferative signaling. Increased phosphorylation during mitosis prevents binding to microtubules.

Its subcellular location is the endoplasmic reticulum membrane. It is found in the cell membrane. It localises to the cytoplasm. The protein localises to the cytoskeleton. The protein resides in the perinuclear region. Functionally, mediates the anchoring of the endoplasmic reticulum to microtubules. High-affinity epithelial cell surface receptor for the FZD8-related low molecular weight sialoglycopeptide APF/antiproliferative factor. Mediates the APF antiproliferative signaling within cells. The protein is Cytoskeleton-associated protein 4 (CKAP4) of Homo sapiens (Human).